A 306-amino-acid polypeptide reads, in one-letter code: Leucotoxin LukEv (306 aa).

The N-terminal stretch at 1–23 (MLAATLSVGLIAPLASPIQESRA) is a signal peptide.

The protein belongs to the aerolysin family. In terms of assembly, toxicity requires sequential binding and synergistic association of a class S and a class F component which form heterooligomeric complexes. LukEv (class S) associates with LukDv (class F).

It is found in the secreted. Part of a bi-component leucotoxin that acts by forming pores in the membrane of the target cells. The activity of LukEv-LukDv to rabbit leukocytes is similar to that of the Panton-Valentine leucocidin (PVL). LukEv-LukDv is hemolytic to rabbit red blood cells although the activity is only 8% of gamma-hemolysin. The chain is Leucotoxin LukEv (lukEv) from Staphylococcus aureus (strain NCTC 8325 / PS 47).